A 269-amino-acid chain; its full sequence is Zinc transporter ZupT (269 aa).

Helical transmembrane passes span 11–31 (IALA…LLVL), 40–60 (LLAF…LSEI), 80–100 (YGTL…HFIP), 125–145 (ALLT…ATFF), 158–178 (AFAI…PVYF), 187–207 (FSAS…GYWL), 217–237 (FGWV…DELL), and 249–269 (TVYG…LFKW). Positions 136 and 139 each coordinate Fe(2+). Positions 139 and 164 each coordinate Zn(2+). The Fe(2+) site is built by Asn-165, Glu-168, and Glu-197. Glu-168 serves as a coordination point for Zn(2+).

Belongs to the ZIP transporter (TC 2.A.5) family. ZupT subfamily.

The protein localises to the cell inner membrane. The enzyme catalyses Zn(2+)(in) = Zn(2+)(out). In terms of biological role, mediates zinc uptake. May also transport other divalent cations. The polypeptide is Zinc transporter ZupT (Stenotrophomonas maltophilia (strain K279a)).